Consider the following 248-residue polypeptide: 3-deoxy-manno-octulosonate cytidylyltransferase (248 aa).

The protein belongs to the KdsB family.

It is found in the cytoplasm. It carries out the reaction 3-deoxy-alpha-D-manno-oct-2-ulosonate + CTP = CMP-3-deoxy-beta-D-manno-octulosonate + diphosphate. The protein operates within nucleotide-sugar biosynthesis; CMP-3-deoxy-D-manno-octulosonate biosynthesis; CMP-3-deoxy-D-manno-octulosonate from 3-deoxy-D-manno-octulosonate and CTP: step 1/1. It participates in bacterial outer membrane biogenesis; lipopolysaccharide biosynthesis. Activates KDO (a required 8-carbon sugar) for incorporation into bacterial lipopolysaccharide in Gram-negative bacteria. This Chlorobaculum tepidum (strain ATCC 49652 / DSM 12025 / NBRC 103806 / TLS) (Chlorobium tepidum) protein is 3-deoxy-manno-octulosonate cytidylyltransferase.